The primary structure comprises 314 residues: 4-hydroxy-3-methylbut-2-enyl diphosphate reductase (314 aa).

Position 12 (C12) interacts with [4Fe-4S] cluster. Positions 41 and 74 each coordinate (2E)-4-hydroxy-3-methylbut-2-enyl diphosphate. H41 and H74 together coordinate dimethylallyl diphosphate. Positions 41 and 74 each coordinate isopentenyl diphosphate. A [4Fe-4S] cluster-binding site is contributed by C96. Residue H124 coordinates (2E)-4-hydroxy-3-methylbut-2-enyl diphosphate. H124 contributes to the dimethylallyl diphosphate binding site. H124 is an isopentenyl diphosphate binding site. E126 acts as the Proton donor in catalysis. T167 lines the (2E)-4-hydroxy-3-methylbut-2-enyl diphosphate pocket. C197 contributes to the [4Fe-4S] cluster binding site. Positions 225, 226, 227, and 269 each coordinate (2E)-4-hydroxy-3-methylbut-2-enyl diphosphate. Residues S225, S226, N227, and S269 each contribute to the dimethylallyl diphosphate site. 4 residues coordinate isopentenyl diphosphate: S225, S226, N227, and S269.

It belongs to the IspH family. [4Fe-4S] cluster serves as cofactor.

The catalysed reaction is isopentenyl diphosphate + 2 oxidized [2Fe-2S]-[ferredoxin] + H2O = (2E)-4-hydroxy-3-methylbut-2-enyl diphosphate + 2 reduced [2Fe-2S]-[ferredoxin] + 2 H(+). The enzyme catalyses dimethylallyl diphosphate + 2 oxidized [2Fe-2S]-[ferredoxin] + H2O = (2E)-4-hydroxy-3-methylbut-2-enyl diphosphate + 2 reduced [2Fe-2S]-[ferredoxin] + 2 H(+). The protein operates within isoprenoid biosynthesis; dimethylallyl diphosphate biosynthesis; dimethylallyl diphosphate from (2E)-4-hydroxy-3-methylbutenyl diphosphate: step 1/1. It functions in the pathway isoprenoid biosynthesis; isopentenyl diphosphate biosynthesis via DXP pathway; isopentenyl diphosphate from 1-deoxy-D-xylulose 5-phosphate: step 6/6. In terms of biological role, catalyzes the conversion of 1-hydroxy-2-methyl-2-(E)-butenyl 4-diphosphate (HMBPP) into a mixture of isopentenyl diphosphate (IPP) and dimethylallyl diphosphate (DMAPP). Acts in the terminal step of the DOXP/MEP pathway for isoprenoid precursor biosynthesis. The protein is 4-hydroxy-3-methylbut-2-enyl diphosphate reductase of Haemophilus influenzae (strain PittEE).